The sequence spans 228 residues: MYLLIPAAGVGKRMGCDRNKLLLEVRSQPIIAWTLLAAQAASEISWIGIISQPTDWPDFKSILANLQLTKPVEFILGGSTRQESVYNGLQALPKAAEQVLIHDGARCLATPNLLNSCAQAIRHCSGLIAAVPVKDTIKVADEDGIIQSTPDRRNLWAAQTPQGFNVELLKQCHAEGVRQGWEVTDDAALFEKCGIEVQIVEGEETNLKVTTPQDLAIAEFILNSRDNS.

The protein belongs to the IspD/TarI cytidylyltransferase family. IspD subfamily.

It carries out the reaction 2-C-methyl-D-erythritol 4-phosphate + CTP + H(+) = 4-CDP-2-C-methyl-D-erythritol + diphosphate. Its pathway is isoprenoid biosynthesis; isopentenyl diphosphate biosynthesis via DXP pathway; isopentenyl diphosphate from 1-deoxy-D-xylulose 5-phosphate: step 2/6. Functionally, catalyzes the formation of 4-diphosphocytidyl-2-C-methyl-D-erythritol from CTP and 2-C-methyl-D-erythritol 4-phosphate (MEP). The sequence is that of 2-C-methyl-D-erythritol 4-phosphate cytidylyltransferase from Trichormus variabilis (strain ATCC 29413 / PCC 7937) (Anabaena variabilis).